Here is a 56-residue protein sequence, read N- to C-terminus: Stable protein 1 (56 aa).

One can recognise a Stress-response A/B barrel domain in the interval 1-44; it reads GYTHAFESTFESKSGLQEYLDSAALAAFAEGFLPTLSQRSFNWG.

The chain is Stable protein 1 from Populus euphratica (Euphrates poplar).